The sequence spans 554 residues: MKIDFNTLFPSSTKEYISGTIYNNIKVGMRRIHINDNSESILTYDTGGPHTDQKIKIDINQGIEKIRLNWIVDRQDVEYHKRQEVNTNSEYAFPLQSNNILKANSNKPITQMYYARNNIITPEMEYVAIRENALRQKILSYKPTVMAPEITPEFVRQEIASGRAIIPANVNHPESEPMIIGKNFLVKINANIGNSVVSSSIEDELQKMIYAIIYGADTVMDLSTGNNIHNIREWIIRNSPVPIGTVPIYQALNKVNGVVGDLDFNIFKKTLIEQAEQGVDYFTIHAGVLKNYIDYTDNRLTGIVSRGGAIMAHWCTIHNKENFLYTNFEEICDIMKHYDITFSLGDGLRPGSIADANDTAQFLELKTLGELTDIAWKHDCQVMIEGPGHVPMHLIKENVEKQVHFCKEAPFYTLGPLTTDIAPGYDHITSAIGAAIIGWYGTSMLCYVTPKEHLGLPNIQDVKDGVIAYKIAAHAADLAKGNPSAYIRDYALSYARFNFKWYDQFNLSLDPETAKSLHDESLPSENAKSAHFCSMCGPKFCSMKLTHQIKSIEE.

Residues Asn-191, Met-220, Tyr-249, His-285, 305–307 (SRG), 346–349 (DGLR), and Glu-385 contribute to the substrate site. Residue His-389 participates in Zn(2+) binding. Tyr-412 serves as a coordination point for substrate. Position 453 (His-453) interacts with Zn(2+). The [4Fe-4S] cluster site is built by Cys-533, Cys-536, and Cys-541.

Belongs to the ThiC family. Homodimer. The cofactor is [4Fe-4S] cluster.

The enzyme catalyses 5-amino-1-(5-phospho-beta-D-ribosyl)imidazole + S-adenosyl-L-methionine = 4-amino-2-methyl-5-(phosphooxymethyl)pyrimidine + CO + 5'-deoxyadenosine + formate + L-methionine + 3 H(+). The protein operates within cofactor biosynthesis; thiamine diphosphate biosynthesis. In terms of biological role, catalyzes the synthesis of the hydroxymethylpyrimidine phosphate (HMP-P) moiety of thiamine from aminoimidazole ribotide (AIR) in a radical S-adenosyl-L-methionine (SAM)-dependent reaction. In Ehrlichia chaffeensis (strain ATCC CRL-10679 / Arkansas), this protein is Phosphomethylpyrimidine synthase.